A 451-amino-acid chain; its full sequence is UPF0210 protein Asuc_1169 (451 aa).

Belongs to the UPF0210 family. Homodimer.

This chain is UPF0210 protein Asuc_1169, found in Actinobacillus succinogenes (strain ATCC 55618 / DSM 22257 / CCUG 43843 / 130Z).